We begin with the raw amino-acid sequence, 259 residues long: Putative protein-disulfide oxidoreductase RBE_1288 (259 aa).

The N-terminal stretch at 1–20 (MRNSFITLIFLLLLSGCSEE) is a signal peptide. The segment at 25–54 (VEQESSESITPAQASTSDENNNQTTETTTP) is disordered. Polar residues predominate over residues 33-42 (ITPAQASTSD). Low complexity predominate over residues 43-54 (ENNNQTTETTTP). Residues 47–251 (QTTETTTPAV…ISAAIDKAIE (205 aa)) form the Thioredoxin domain. A disulfide bond links Cys-104 and Cys-107.

Belongs to the thioredoxin family. DsbA subfamily.

The protein resides in the periplasm. In terms of biological role, may be required for disulfide bond formation in some proteins. The polypeptide is Putative protein-disulfide oxidoreductase RBE_1288 (Rickettsia bellii (strain RML369-C)).